The primary structure comprises 447 residues: UPF0597 protein Amet_4665 (447 aa).

The protein belongs to the UPF0597 family.

This is UPF0597 protein Amet_4665 from Alkaliphilus metalliredigens (strain QYMF).